A 177-amino-acid polypeptide reads, in one-letter code: Large ribosomal subunit protein uL6 (177 aa).

The protein belongs to the universal ribosomal protein uL6 family. Part of the 50S ribosomal subunit.

In terms of biological role, this protein binds to the 23S rRNA, and is important in its secondary structure. It is located near the subunit interface in the base of the L7/L12 stalk, and near the tRNA binding site of the peptidyltransferase center. This is Large ribosomal subunit protein uL6 from Parvibaculum lavamentivorans (strain DS-1 / DSM 13023 / NCIMB 13966).